The following is a 231-amino-acid chain: Orotidine 5'-phosphate decarboxylase (231 aa).

Substrate contacts are provided by residues aspartate 11, lysine 34, 61 to 70 (DLKLHDIPNT), threonine 117, arginine 179, glutamine 188, glycine 208, and arginine 209. Lysine 63 (proton donor) is an active-site residue.

It belongs to the OMP decarboxylase family. Type 1 subfamily. As to quaternary structure, homodimer.

It catalyses the reaction orotidine 5'-phosphate + H(+) = UMP + CO2. The protein operates within pyrimidine metabolism; UMP biosynthesis via de novo pathway; UMP from orotate: step 2/2. Its function is as follows. Catalyzes the decarboxylation of orotidine 5'-monophosphate (OMP) to uridine 5'-monophosphate (UMP). In Streptococcus thermophilus (strain ATCC BAA-491 / LMD-9), this protein is Orotidine 5'-phosphate decarboxylase.